The sequence spans 158 residues: Ribonuclease HI (158 aa).

Residues 3-144 enclose the RNase H type-1 domain; the sequence is ELKLIHIFTD…CDQLARAAAE (142 aa). Mg(2+) is bound by residues Asp-12, Glu-50, Asp-72, and Asp-136.

It belongs to the RNase H family. In terms of assembly, monomer. Mg(2+) is required as a cofactor.

Its subcellular location is the cytoplasm. The enzyme catalyses Endonucleolytic cleavage to 5'-phosphomonoester.. Its function is as follows. Endonuclease that specifically degrades the RNA of RNA-DNA hybrids. The polypeptide is Ribonuclease HI (Shewanella oneidensis (strain ATCC 700550 / JCM 31522 / CIP 106686 / LMG 19005 / NCIMB 14063 / MR-1)).